The chain runs to 207 residues: Ubiquinol-cytochrome c reductase iron-sulfur subunit (207 aa).

Residues 24 to 44 (LVAATSVVGAVGAGYALVPFV) traverse the membrane as a helical segment. A Rieske domain is found at 100 to 199 (PKLVDPTSEV…HVYLNDTTIL (100 aa)). Positions 134, 136, 162, and 165 each coordinate [2Fe-2S] cluster. Cys139 and Cys164 are disulfide-bonded.

The main subunits of complex b-c1 are: cytochrome b, cytochrome c1 and the Rieske protein. [2Fe-2S] cluster serves as cofactor.

Its subcellular location is the cell membrane. The catalysed reaction is a quinol + 2 Fe(III)-[cytochrome c](out) = a quinone + 2 Fe(II)-[cytochrome c](out) + 2 H(+)(out). In terms of biological role, component of the ubiquinol-cytochrome c reductase complex (complex III or cytochrome b-c1 complex), which is a respiratory chain that generates an electrochemical potential coupled to ATP synthesis. In Allochromatium vinosum (strain ATCC 17899 / DSM 180 / NBRC 103801 / NCIMB 10441 / D) (Chromatium vinosum), this protein is Ubiquinol-cytochrome c reductase iron-sulfur subunit (petA).